Here is a 454-residue protein sequence, read N- to C-terminus: Asparagine--tRNA ligase (454 aa).

Belongs to the class-II aminoacyl-tRNA synthetase family. As to quaternary structure, homodimer.

The protein localises to the cytoplasm. The enzyme catalyses tRNA(Asn) + L-asparagine + ATP = L-asparaginyl-tRNA(Asn) + AMP + diphosphate + H(+). The polypeptide is Asparagine--tRNA ligase (Mesoplasma florum (strain ATCC 33453 / NBRC 100688 / NCTC 11704 / L1) (Acholeplasma florum)).